Consider the following 319-residue polypeptide: Acetyl-coenzyme A carboxylase carboxyl transferase subunit alpha (319 aa).

In terms of domain architecture, CoA carboxyltransferase C-terminal spans 43 to 296; that stretch reads LKQKSVELTQ…KTQLLLDLVE (254 aa).

Belongs to the AccA family. Acetyl-CoA carboxylase is a heterohexamer composed of biotin carboxyl carrier protein (AccB), biotin carboxylase (AccC) and two subunits each of ACCase subunit alpha (AccA) and ACCase subunit beta (AccD).

It is found in the cytoplasm. It catalyses the reaction N(6)-carboxybiotinyl-L-lysyl-[protein] + acetyl-CoA = N(6)-biotinyl-L-lysyl-[protein] + malonyl-CoA. It participates in lipid metabolism; malonyl-CoA biosynthesis; malonyl-CoA from acetyl-CoA: step 1/1. Functionally, component of the acetyl coenzyme A carboxylase (ACC) complex. First, biotin carboxylase catalyzes the carboxylation of biotin on its carrier protein (BCCP) and then the CO(2) group is transferred by the carboxyltransferase to acetyl-CoA to form malonyl-CoA. The polypeptide is Acetyl-coenzyme A carboxylase carboxyl transferase subunit alpha (Blochmanniella floridana).